Reading from the N-terminus, the 426-residue chain is Serine--tRNA ligase (426 aa).

233-235 (TAE) is an L-serine binding site. 264–266 (RSE) is an ATP binding site. E287 contacts L-serine. 351–354 (EISS) is an ATP binding site. S385 contributes to the L-serine binding site.

This sequence belongs to the class-II aminoacyl-tRNA synthetase family. Type-1 seryl-tRNA synthetase subfamily. As to quaternary structure, homodimer. The tRNA molecule binds across the dimer.

It localises to the cytoplasm. The catalysed reaction is tRNA(Ser) + L-serine + ATP = L-seryl-tRNA(Ser) + AMP + diphosphate + H(+). The enzyme catalyses tRNA(Sec) + L-serine + ATP = L-seryl-tRNA(Sec) + AMP + diphosphate + H(+). It functions in the pathway aminoacyl-tRNA biosynthesis; selenocysteinyl-tRNA(Sec) biosynthesis; L-seryl-tRNA(Sec) from L-serine and tRNA(Sec): step 1/1. Functionally, catalyzes the attachment of serine to tRNA(Ser). Is also able to aminoacylate tRNA(Sec) with serine, to form the misacylated tRNA L-seryl-tRNA(Sec), which will be further converted into selenocysteinyl-tRNA(Sec). In Brachyspira hyodysenteriae (strain ATCC 49526 / WA1), this protein is Serine--tRNA ligase.